Consider the following 400-residue polypeptide: S-adenosylmethionine decarboxylase proenzyme (400 aa).

Catalysis depends on residues Glu18 and Glu21. The Schiff-base intermediate with substrate; via pyruvic acid role is filled by Ser78. The residue at position 78 (Ser78) is a Pyruvic acid (Ser); by autocatalysis. Catalysis depends on Cys92, which acts as the Proton donor; for catalytic activity. Residues Ser243 and His256 each act as proton acceptor; for processing activity in the active site.

It belongs to the eukaryotic AdoMetDC family. Pyruvate serves as cofactor. Is synthesized initially as an inactive proenzyme. Formation of the active enzyme involves a self-maturation process in which the active site pyruvoyl group is generated from an internal serine residue via an autocatalytic post-translational modification. Two non-identical subunits are generated from the proenzyme in this reaction, and the pyruvate is formed at the N-terminus of the alpha chain, which is derived from the carboxyl end of the proenzyme. The post-translation cleavage follows an unusual pathway, termed non-hydrolytic serinolysis, in which the side chain hydroxyl group of the serine supplies its oxygen atom to form the C-terminus of the beta chain, while the remainder of the serine residue undergoes an oxidative deamination to produce ammonia and the pyruvoyl group blocking the N-terminus of the alpha chain.

It carries out the reaction S-adenosyl-L-methionine + H(+) = S-adenosyl 3-(methylsulfanyl)propylamine + CO2. Its pathway is amine and polyamine biosynthesis; S-adenosylmethioninamine biosynthesis; S-adenosylmethioninamine from S-adenosyl-L-methionine: step 1/1. This chain is S-adenosylmethionine decarboxylase proenzyme (SAMDC), found in Zea mays (Maize).